Here is an 89-residue protein sequence, read N- to C-terminus: Small ribosomal subunit protein uS15 (89 aa).

The interval 1–25 (MSLDTTEKQQLINTHQTHGTDTGSA) is disordered. The segment covering 8–25 (KQQLINTHQTHGTDTGSA) has biased composition (polar residues).

This sequence belongs to the universal ribosomal protein uS15 family. As to quaternary structure, part of the 30S ribosomal subunit. Forms a bridge to the 50S subunit in the 70S ribosome, contacting the 23S rRNA.

Its function is as follows. One of the primary rRNA binding proteins, it binds directly to 16S rRNA where it helps nucleate assembly of the platform of the 30S subunit by binding and bridging several RNA helices of the 16S rRNA. Functionally, forms an intersubunit bridge (bridge B4) with the 23S rRNA of the 50S subunit in the ribosome. The sequence is that of Small ribosomal subunit protein uS15 from Parasynechococcus marenigrum (strain WH8102).